The sequence spans 101 residues: Small ribosomal subunit protein uS14 (101 aa).

The protein belongs to the universal ribosomal protein uS14 family. In terms of assembly, part of the 30S ribosomal subunit. Contacts proteins S3 and S10.

Functionally, binds 16S rRNA, required for the assembly of 30S particles and may also be responsible for determining the conformation of the 16S rRNA at the A site. In Pseudomonas syringae pv. syringae (strain B728a), this protein is Small ribosomal subunit protein uS14.